We begin with the raw amino-acid sequence, 333 residues long: Ephrin-B2 (333 aa).

Residues 1–27 form the signal peptide; sequence MAVRRDSVWKYCWGVLMVLCRTAISKS. The 137-residue stretch at 28–164 folds into the Ephrin RBD domain; the sequence is IVLEPIYWNS…TRAMKILMKV (137 aa). Over 28-229 the chain is Extracellular; it reads IVLEPIYWNS…ILGSEVALFA (202 aa). Asparagine 36 carries an N-linked (GlcNAc...) asparagine glycan. 2 disulfides stabilise this stretch: cysteine 62–cysteine 101 and cysteine 89–cysteine 153. Residue asparagine 139 is glycosylated (N-linked (GlcNAc...) asparagine). The interval 165–213 is disordered; that stretch reads GQDASSAGSTRNKDPTRRPELEAGTNGRSSTTSPFVKPNPGSSTDGNSA. Residues 175-185 are compositionally biased toward basic and acidic residues; that stretch reads RNKDPTRRPEL. Over residues 190–213 the composition is skewed to polar residues; the sequence is NGRSSTTSPFVKPNPGSSTDGNSA. A helical membrane pass occupies residues 230-250; the sequence is GIASGCIIFIVIIITLVVLLL. The Cytoplasmic segment spans residues 251–333; it reads KYRRRHRKHS…QSPANIYYKV (83 aa). Serine 260 is modified (phosphoserine). Threonine 274 carries the phosphothreonine modification. Omega-N-methylarginine is present on arginine 277. The PDZ-binding signature appears at 331 to 333; it reads YKV.

It belongs to the ephrin family. In terms of assembly, interacts with PDZRN3. Binds to the receptor tyrosine kinases EPHA4, EPHB4 and EPHA3. (Microbial infection) Interacts with Hendra virus and Nipah virus G protein. Post-translationally, inducible phosphorylation of tyrosine residues in the cytoplasmic domain. Lung and kidney.

It localises to the cell membrane. The protein localises to the cell junction. The protein resides in the adherens junction. In terms of biological role, cell surface transmembrane ligand for Eph receptors, a family of receptor tyrosine kinases which are crucial for migration, repulsion and adhesion during neuronal, vascular and epithelial development. Binds promiscuously Eph receptors residing on adjacent cells, leading to contact-dependent bidirectional signaling into neighboring cells. The signaling pathway downstream of the receptor is referred to as forward signaling while the signaling pathway downstream of the ephrin ligand is referred to as reverse signaling. Binds to receptor tyrosine kinase including EPHA4, EPHA3 and EPHB4. Together with EPHB4 plays a central role in heart morphogenesis and angiogenesis through regulation of cell adhesion and cell migration. EPHB4-mediated forward signaling controls cellular repulsion and segregation from EFNB2-expressing cells. May play a role in constraining the orientation of longitudinally projecting axons. Its function is as follows. (Microbial infection) Acts as a receptor for Hendra virus and Nipah virus. The polypeptide is Ephrin-B2 (EFNB2) (Homo sapiens (Human)).